Consider the following 321-residue polypeptide: MTQPLRIIFAGTPDFAARHLQALIQSEHQIVGVYSQPDRPAGRGKKLKASEVKELALEHNLPVFQPQSLKTEDALNELTRLNADIMIVVAYGLILPKAILDAPRLGCLNVHGSILPRWRGAAPIQRAIWAGDEQTGVTIMQMNEGLDTGDMLHISRCPISATETSASLYTKLADLGPGALIDTINNLANGKITPEPQNDAAANYAKKLSKDEANIDWSMSAAQIERNIRAFNPWPVCFTQMGGQPVKIYQAHVVEQSSSQPDNNGRVLSSDKNGVIVGCGEHALCITQLQPQGKKPMAINDFLNGRSDWVTPGTILGENNE.

Ser113–Pro116 contributes to the (6S)-5,6,7,8-tetrahydrofolate binding site.

The protein belongs to the Fmt family.

The enzyme catalyses L-methionyl-tRNA(fMet) + (6R)-10-formyltetrahydrofolate = N-formyl-L-methionyl-tRNA(fMet) + (6S)-5,6,7,8-tetrahydrofolate + H(+). In terms of biological role, attaches a formyl group to the free amino group of methionyl-tRNA(fMet). The formyl group appears to play a dual role in the initiator identity of N-formylmethionyl-tRNA by promoting its recognition by IF2 and preventing the misappropriation of this tRNA by the elongation apparatus. This is Methionyl-tRNA formyltransferase from Pseudoalteromonas translucida (strain TAC 125).